Here is a 471-residue protein sequence, read N- to C-terminus: Cysteine--tRNA ligase (471 aa).

Residue Cys29 participates in Zn(2+) binding. The short motif at 31–41 (PTVYNYIHIGN) is the 'HIGH' region element. Residues Cys209, His234, and Glu238 each coordinate Zn(2+). The 'KMSKS' region signature appears at 266 to 270 (KMSKS). Residue Lys269 participates in ATP binding.

The protein belongs to the class-I aminoacyl-tRNA synthetase family. As to quaternary structure, monomer. Zn(2+) is required as a cofactor.

It is found in the cytoplasm. The enzyme catalyses tRNA(Cys) + L-cysteine + ATP = L-cysteinyl-tRNA(Cys) + AMP + diphosphate. The polypeptide is Cysteine--tRNA ligase (Listeria monocytogenes serotype 4b (strain CLIP80459)).